The following is a 121-amino-acid chain: Ribonuclease P protein component (121 aa).

This sequence belongs to the RnpA family. As to quaternary structure, consists of a catalytic RNA component (M1 or rnpB) and a protein subunit.

It carries out the reaction Endonucleolytic cleavage of RNA, removing 5'-extranucleotides from tRNA precursor.. RNaseP catalyzes the removal of the 5'-leader sequence from pre-tRNA to produce the mature 5'-terminus. It can also cleave other RNA substrates such as 4.5S RNA. The protein component plays an auxiliary but essential role in vivo by binding to the 5'-leader sequence and broadening the substrate specificity of the ribozyme. This chain is Ribonuclease P protein component, found in Rickettsia prowazekii (strain Madrid E).